The primary structure comprises 327 residues: tRNA dimethylallyltransferase (327 aa).

14–21 (GPTASGKT) lines the ATP pocket. 16–21 (TASGKT) contacts substrate. Interaction with substrate tRNA stretches follow at residues 39–42 (DSAL) and 163–167 (QRIQR).

This sequence belongs to the IPP transferase family. In terms of assembly, monomer. It depends on Mg(2+) as a cofactor.

The catalysed reaction is adenosine(37) in tRNA + dimethylallyl diphosphate = N(6)-dimethylallyladenosine(37) in tRNA + diphosphate. In terms of biological role, catalyzes the transfer of a dimethylallyl group onto the adenine at position 37 in tRNAs that read codons beginning with uridine, leading to the formation of N6-(dimethylallyl)adenosine (i(6)A). The sequence is that of tRNA dimethylallyltransferase from Xanthomonas axonopodis pv. citri (strain 306).